A 65-amino-acid chain; its full sequence is MEKLRKFFREVIAEAKKISWPSRKELLTSFGVVLVILAVTSVYFFVLDFIFSGVVSAIFKALGIG.

Residues 1–34 lie on the Cytoplasmic side of the membrane; the sequence is MEKLRKFFREVIAEAKKISWPSRKELLTSFGVVL. The chain crosses the membrane as a helical span at residues 35-51; the sequence is VILAVTSVYFFVLDFIF. Over 52 to 65 the chain is Extracellular; the sequence is SGVVSAIFKALGIG.

This sequence belongs to the SecE/SEC61-gamma family. Component of the Sec protein translocase complex. Heterotrimer consisting of SecY, SecE and SecG subunits. The heterotrimers can form oligomers, although 1 heterotrimer is thought to be able to translocate proteins. Interacts with SecDF, and other proteins may be involved. The channel interacts with SecA via subunit SecY.

It localises to the cell inner membrane. Functionally, essential subunit of the protein translocation channel SecYEG. Clamps together the 2 halves of SecY. May contact the channel plug during translocation. This chain is Protein translocase subunit SecE, found in Thermotoga maritima (strain ATCC 43589 / DSM 3109 / JCM 10099 / NBRC 100826 / MSB8).